Reading from the N-terminus, the 95-residue chain is Aspartyl/glutamyl-tRNA(Asn/Gln) amidotransferase subunit C (95 aa).

The protein belongs to the GatC family. In terms of assembly, heterotrimer of A, B and C subunits.

The enzyme catalyses L-glutamyl-tRNA(Gln) + L-glutamine + ATP + H2O = L-glutaminyl-tRNA(Gln) + L-glutamate + ADP + phosphate + H(+). The catalysed reaction is L-aspartyl-tRNA(Asn) + L-glutamine + ATP + H2O = L-asparaginyl-tRNA(Asn) + L-glutamate + ADP + phosphate + 2 H(+). Functionally, allows the formation of correctly charged Asn-tRNA(Asn) or Gln-tRNA(Gln) through the transamidation of misacylated Asp-tRNA(Asn) or Glu-tRNA(Gln) in organisms which lack either or both of asparaginyl-tRNA or glutaminyl-tRNA synthetases. The reaction takes place in the presence of glutamine and ATP through an activated phospho-Asp-tRNA(Asn) or phospho-Glu-tRNA(Gln). This Rhizobium etli (strain CIAT 652) protein is Aspartyl/glutamyl-tRNA(Asn/Gln) amidotransferase subunit C.